A 700-amino-acid polypeptide reads, in one-letter code: ATP-dependent DNA helicase UvrD2 (700 aa).

In terms of domain architecture, UvrD-like helicase ATP-binding spans 10 to 301; that stretch reads AGLDDQQREA…VRLERDYRST (292 aa). ATP is bound by residues 34-39 and arginine 299; that span reads GTGKTR. Positions 302–553 constitute a UvrD-like helicase C-terminal domain; the sequence is PQVVSLANRV…LYVGITRARV (252 aa). Residues 565 to 595 form a disordered region; sequence PGGRQSRKPSRFLNGIAPQTRADPVPGTSRR. The HRDC domain occupies 626-700; the sequence is ADVDEELLLQ…DVLQLVRGRT (75 aa).

Belongs to the helicase family. UvrD subfamily. Mg(2+) is required as a cofactor.

The enzyme catalyses Couples ATP hydrolysis with the unwinding of duplex DNA by translocating in the 3'-5' direction.. It catalyses the reaction ATP + H2O = ADP + phosphate + H(+). Functionally, DNA-dependent ATPase, stimulated equally by ss- and dsDNA. Has both ATPase and helicase activities. In Mycobacterium bovis (strain ATCC BAA-935 / AF2122/97), this protein is ATP-dependent DNA helicase UvrD2 (uvrD2).